Here is a 344-residue protein sequence, read N- to C-terminus: UDP-glycosyltransferase 73C4 (344 aa).

UDP-alpha-D-glucose contacts are provided by residues Ser-145, 202-203, 220-228, and 242-245; these read WA, HCGWNSSLE, and FAEQ.

This sequence belongs to the UDP-glycosyltransferase family. In terms of tissue distribution, expressed in flowers and fruits.

It is found in the cytoplasm. The protein localises to the nucleus. Functionally, probable glucosyltransferase that cannot glycosylate abscisic acid (ABA) and auxin (IAA). The sequence is that of UDP-glycosyltransferase 73C4 from Solanum lycopersicum (Tomato).